Reading from the N-terminus, the 245-residue chain is MAPK-interacting and spindle-stabilizing protein-like (245 aa).

A disordered region spans residues 1–245; that stretch reads MSDEFSLADA…PMPGGPHSYH (245 aa). N-acetylserine is present on Ser-2. 3 positions are modified to phosphoserine: Ser-2, Ser-6, and Ser-15. Positions 17-26 are enriched in polar residues; sequence AKTSAVSNTK. The span at 34-51 shows a compositional bias: low complexity; that stretch reads WPGSNPWNNPSAPSSVPS. Pro residues-rich tracts occupy residues 74-127, 164-190, and 198-207; these read SVPP…PELP, PNMP…PPVP, and AWGPPAPYPA.

This sequence belongs to the MISS family.

The protein is MAPK-interacting and spindle-stabilizing protein-like (MAPK1IP1L) of Homo sapiens (Human).